Here is a 316-residue protein sequence, read N- to C-terminus: Peptidoglycan hydrolase FlgJ (316 aa).

A catalytic region spans residues 151-316 (DSKDFLARLS…TYSANLDNLF (166 aa)). Residues glutamate 223 and aspartate 248 contribute to the active site.

It in the N-terminal section; belongs to the FlgJ family. In the C-terminal section; belongs to the glycosyl hydrolase 73 family.

It is found in the periplasm. Functionally, flagellum-specific muramidase which hydrolyzes the peptidoglycan layer to assemble the rod structure in the periplasmic space. The protein is Peptidoglycan hydrolase FlgJ (flgJ) of Salmonella typhimurium (strain LT2 / SGSC1412 / ATCC 700720).